We begin with the raw amino-acid sequence, 430 residues long: Enolase (430 aa).

Gln-164 serves as a coordination point for (2R)-2-phosphoglycerate. The active-site Proton donor is the Glu-208. The Mg(2+) site is built by Asp-245, Glu-288, and Asp-315. Lys-340, Arg-369, Ser-370, and Lys-391 together coordinate (2R)-2-phosphoglycerate. Lys-340 acts as the Proton acceptor in catalysis.

It belongs to the enolase family. The cofactor is Mg(2+).

It localises to the cytoplasm. The protein resides in the secreted. It is found in the cell surface. It carries out the reaction (2R)-2-phosphoglycerate = phosphoenolpyruvate + H2O. Its pathway is carbohydrate degradation; glycolysis; pyruvate from D-glyceraldehyde 3-phosphate: step 4/5. Catalyzes the reversible conversion of 2-phosphoglycerate (2-PG) into phosphoenolpyruvate (PEP). It is essential for the degradation of carbohydrates via glycolysis. The chain is Enolase from Pyrococcus furiosus (strain ATCC 43587 / DSM 3638 / JCM 8422 / Vc1).